The chain runs to 131 residues: Profilin-3 (131 aa).

The protein belongs to the profilin family. In terms of assembly, occurs in many kinds of cells as a complex with monomeric actin in a 1:1 ratio.

Its subcellular location is the cytoplasm. The protein resides in the cytoskeleton. Binds to actin and affects the structure of the cytoskeleton. At high concentrations, profilin prevents the polymerization of actin, whereas it enhances it at low concentrations. By binding to PIP2, it inhibits the formation of IP3 and DG. The protein is Profilin-3 of Hevea brasiliensis (Para rubber tree).